A 500-amino-acid chain; its full sequence is Melanopsin (500 aa).

Over 1 to 65 (MSHHSSWRGH…TVDVPDHAHY (65 aa)) the chain is Extracellular. N-linked (GlcNAc...) asparagine glycosylation is present at N18. A helical transmembrane segment spans residues 66–86 (IIGAVILIVGITGVIGNALVI). The Cytoplasmic portion of the chain corresponds to 87–101 (YVFCRSRTLRTAGNM). A helical transmembrane segment spans residues 102–122 (FVVNLAVADFFMSLTQSPVFF). The Extracellular segment spans residues 123–138 (AASLHRRWIFGERICE). C137 and C215 are joined by a disulfide. The chain crosses the membrane as a helical span at residues 139–159 (LYAFCGALFGICSMMTLTAIA). Residues 160-182 (ADRCLAITQPLALVGNVSRRKAG) lie on the Cytoplasmic side of the membrane. The helical transmembrane segment at 183–203 (AVLAVVWLYSLGWSLPPFFGW) threads the bilayer. Topologically, residues 204–232 (SAYVPEGLQTSCSWDYMTFTPSVRAYTIL) are extracellular. Residues 233–253 (LFIFVFFIPLGIIVSCYVGIF) form a helical membrane-spanning segment. Over 254-286 (QAIRAMGKEIRELDCGETQKVYERMQNEWKMAK) the chain is Cytoplasmic. The chain crosses the membrane as a helical span at residues 287–307 (IALLVILLFVISWSPYSVVAL). The Extracellular segment spans residues 308-322 (TATAGYSHLLTPYMN). The helical transmembrane segment at 323 to 343 (SVPAVIAKASAIHNPIIYAIT) threads the bilayer. N6-(retinylidene)lysine is present on K330. Residues 344-500 (HPKYRAAIAR…DGKALLLGGN (157 aa)) are Cytoplasmic-facing. Disordered regions lie at residues 406 to 428 (GKKRLSSASDSDSCWTESEADGS), 448 to 470 (VILSPGSSNSTASGQKSEKAHKV), and 481 to 500 (ETDSADESLSDGKALLLGGN). Composition is skewed to polar residues over residues 411–428 (SSASDSDSCWTESEADGS) and 448–462 (VILSPGSSNSTASGQ).

It belongs to the G-protein coupled receptor 1 family. Opsin subfamily. As to expression, expressed in a subset of retinal horizontal cells as well as in retinal ganglion cells.

It localises to the cell membrane. In terms of biological role, photoreceptor implicated in non-image-forming responses to light. The chain is Melanopsin (opn4) from Rutilus rutilus (Roach).